A 407-amino-acid polypeptide reads, in one-letter code: Imidazolonepropionase (407 aa).

2 residues coordinate Fe(3+): His-72 and His-74. The Zn(2+) site is built by His-72 and His-74. 4-imidazolone-5-propanoate-binding residues include Arg-81, Tyr-144, and His-177. Position 144 (Tyr-144) interacts with N-formimidoyl-L-glutamate. A Fe(3+)-binding site is contributed by His-242. His-242 contributes to the Zn(2+) binding site. Residue Gln-245 participates in 4-imidazolone-5-propanoate binding. Asp-317 contacts Fe(3+). Asp-317 contributes to the Zn(2+) binding site. 2 residues coordinate N-formimidoyl-L-glutamate: Asn-319 and Gly-321. Thr-322 lines the 4-imidazolone-5-propanoate pocket.

Belongs to the metallo-dependent hydrolases superfamily. HutI family. The cofactor is Zn(2+). Fe(3+) serves as cofactor.

The protein resides in the cytoplasm. It catalyses the reaction 4-imidazolone-5-propanoate + H2O = N-formimidoyl-L-glutamate. Its pathway is amino-acid degradation; L-histidine degradation into L-glutamate; N-formimidoyl-L-glutamate from L-histidine: step 3/3. In terms of biological role, catalyzes the hydrolytic cleavage of the carbon-nitrogen bond in imidazolone-5-propanoate to yield N-formimidoyl-L-glutamate. It is the third step in the universal histidine degradation pathway. The polypeptide is Imidazolonepropionase (Aliivibrio salmonicida (strain LFI1238) (Vibrio salmonicida (strain LFI1238))).